Here is a 198-residue protein sequence, read N- to C-terminus: Probable thymidylate kinase (198 aa).

Residue 9–16 (GIDGSGKT) participates in ATP binding.

Belongs to the thymidylate kinase family.

The enzyme catalyses dTMP + ATP = dTDP + ADP. This chain is Probable thymidylate kinase, found in Methanococcus vannielii (strain ATCC 35089 / DSM 1224 / JCM 13029 / OCM 148 / SB).